A 595-amino-acid polypeptide reads, in one-letter code: L-allo-isoleucine:holo-[CmaA peptidyl-carrier protein] ligase (595 aa).

One can recognise a Carrier domain in the interval 507–582 (VVSPQAGSAV…EWVQYYATHA (76 aa)). An O-(pantetheine 4'-phosphoryl)serine modification is found at Ser542.

The protein belongs to the ATP-dependent AMP-binding enzyme family. Homodimer. Pantetheine 4'-phosphate is required as a cofactor.

It catalyses the reaction L-alloisoleucine + holo-[CmaA peptidyl-carrier protein] + ATP = L-alloisoleucyl-[CmaA peptidyl-carrier protein] + AMP + diphosphate. Functionally, involved in the biosynthesis of the phytotoxin coronatine (COR) which mimics the plant hormone jasmonic acid isoleucine and promotes opening of stomata for bacterial entry, bacterial growth in the apoplast, systemic susceptibility, and disease symptoms. CmaA catalyzes the adenylation of L-allo-isoleucine (via the A domain) and the attachment of L-allo-isoleucine to the 4'-phosphopantetheine arm located within the T domain of CmaA. It can also use L-isoleucine, L-leucine and L-valine as substrates. The chain is L-allo-isoleucine:holo-[CmaA peptidyl-carrier protein] ligase from Pseudomonas savastanoi pv. glycinea (Pseudomonas syringae pv. glycinea).